A 225-amino-acid polypeptide reads, in one-letter code: UPF0758 protein AZOSEA04420 (225 aa).

The 124-residue stretch at 102-225 (VFESPLAVRN…PLSFAERGLL (124 aa)) folds into the MPN domain. Residues His-173, His-175, and Asp-186 each contribute to the Zn(2+) site. Positions 173 to 186 (HNHPSGAAEPSPAD) match the JAMM motif motif.

It belongs to the UPF0758 family.

The polypeptide is UPF0758 protein AZOSEA04420 (Aromatoleum aromaticum (strain DSM 19018 / LMG 30748 / EbN1) (Azoarcus sp. (strain EbN1))).